The primary structure comprises 210 residues: Mitochondrial cardiolipin hydrolase (210 aa).

Residues 1-6 (MLLWGR) lie on the Mitochondrial intermembrane side of the membrane. A helical membrane pass occupies residues 7-24 (WKVVAGLAGLALSLELLL). Residues 25 to 210 (RYMRRRKPIR…YDFFPEKENK (186 aa)) lie on the Cytoplasmic side of the membrane. A PLD phosphodiesterase domain is found at 138 to 165 (SSGYMHHKFAVVDGTVVLTGSLNWTVQA). Residues His-143, Lys-145, and Asp-150 contribute to the active site.

It belongs to the phospholipase D family. MitoPLD/Zucchini subfamily. As to quaternary structure, homodimer.

Its subcellular location is the mitochondrion outer membrane. It carries out the reaction a cardiolipin + H2O = a 1,2-diacyl-sn-glycero-3-phospho-(1'-sn-glycerol) + a 1,2-diacyl-sn-glycero-3-phosphate + H(+). Functionally, presents phospholipase and nuclease activities, depending on the different physiological conditions. Plays a key role in mitochondrial fusion and fission via its phospholipase activity. In its phospholipase role, it uses the mitochondrial lipid cardiolipin as substrate to generate phosphatidate (PA or 1,2-diacyl-sn-glycero-3-phosphate), a second messenger signaling lipid. Production of PA facilitates Mitofusin-mediated fusion, whereas the cleavage of PA by the Lipin family of phosphatases produces diacylgycerol (DAG) which promotes mitochondrial fission. Regulates mitochondrial shape through facilitating mitochondrial fusion. During spermatogenesis, plays a critical role in PIWI-interacting RNA (piRNA) biogenesis. piRNAs provide essential protection against the activity of mobile genetic elements. piRNA-mediated transposon silencing is thus critical for maintaining genome stability, in particular in germline cells when transposons are mobilized as a consequence of wide-spread genomic demethylation. Has been shown to be a backbone-non-specific, single strand-specific nuclease, cleaving either RNA or DNA substrates with similar affinity. Produces 5' phosphate and 3' hydroxyl termini, suggesting it could directly participate in the processing of primary piRNA transcripts. Has been proposed to act as a cardiolipin hydrolase to generate phosphatidic acid at mitochondrial surface. Although it cannot be excluded that it can act as a phospholipase in some circumstances, this activity could not be confirmed. The sequence is that of Mitochondrial cardiolipin hydrolase (pld6) from Xenopus tropicalis (Western clawed frog).